Here is a 258-residue protein sequence, read N- to C-terminus: 5'-nucleotidase SurE (258 aa).

A divalent metal cation contacts are provided by D14, D15, S45, and N101.

Belongs to the SurE nucleotidase family. A divalent metal cation serves as cofactor.

It is found in the cytoplasm. It catalyses the reaction a ribonucleoside 5'-phosphate + H2O = a ribonucleoside + phosphate. In terms of biological role, nucleotidase that shows phosphatase activity on nucleoside 5'-monophosphates. The chain is 5'-nucleotidase SurE from Chlorobium phaeobacteroides (strain DSM 266 / SMG 266 / 2430).